The primary structure comprises 229 residues: Cell division topological specificity factor homolog, chloroplastic (229 aa).

The N-terminal 30 residues, 1–30 (MAMSSGTLRISATLVSPYHHHHRNRLSLPS), are a transit peptide targeting the chloroplast. The segment at 35–141 (VDFTGFISNG…KMILFSDRCD (107 aa)) is interaction with MIND1. The segment at 142 to 169 (VSDEAKRKIVNNIIHALSDFVEIESEEK) is homodimerization.

Belongs to the MinE family. As to quaternary structure, homodimer. Interacts with MIND1. These interactions are required for proper intraplastidic localization. Binds to ARC3. As to expression, expressed in green tissues, especially at the shoot apex. Also present in leaves, stems, buds, and flowers, especially in sepals, siliques (tip and base), and anthers (mostly in pollen grains).

It localises to the plastid. It is found in the chloroplast. Acts as a topological specificity factor during plastid division and specify plastid constriction sites (such as the Z-ring) in a MCD1-dependent manner. Especially involved in epidermal plastids division in a FTSZ1-dependent manner. Required for the proper formation of FtsZ rings at the division site in nongreen plastids (e.g. etioplasts). May contribute to gravitropism in stems and hypocotyls. Stimulates MIND1 ATPase activity. In cooperation with MIND1, prevents FtsZ ring formation anywhere outside of the mid-plastids. The chain is Cell division topological specificity factor homolog, chloroplastic from Arabidopsis thaliana (Mouse-ear cress).